The primary structure comprises 304 residues: Carnitine monooxygenase reductase subunit (304 aa).

The region spanning 1–93 (MEQLTPLIKR…SEPKNLFPLA (93 aa)) is the FAD-binding FR-type domain. Positions 219-304 (FTVVLAKSNQ…AKGKKLVLDL (86 aa)) constitute a 2Fe-2S ferredoxin-type domain. Positions 253, 258, 261, and 291 each coordinate [2Fe-2S] cluster.

The protein belongs to the PDR/VanB family. CntB subfamily. In terms of assembly, composed of an oxygenase subunit and a reductase subunit. FMN serves as cofactor. It depends on [2Fe-2S] cluster as a cofactor.

The enzyme catalyses (R)-carnitine + NADH + O2 + H(+) = (3R)-3-hydroxy-4-oxobutanoate + trimethylamine + NAD(+) + H2O. The catalysed reaction is (R)-carnitine + NADPH + O2 + H(+) = (3R)-3-hydroxy-4-oxobutanoate + trimethylamine + NADP(+) + H2O. Its pathway is amine and polyamine metabolism; carnitine metabolism. Inhibited by EDTA. In terms of biological role, converts carnitine to trimethylamine and malic semialdehyde. Acts on both enantiomers. This chain is Carnitine monooxygenase reductase subunit, found in Acinetobacter pittii (strain PHEA-2).